The following is a 55-amino-acid chain: Potassium channel toxin alpha-KTX 12 Sp2 (55 aa).

Positions 1-18 (MRLAIILLLMTTIVLTIG) are cleaved as a signal peptide. Cystine bridges form between cysteine 26–cysteine 46, cysteine 32–cysteine 51, and cysteine 36–cysteine 53.

Belongs to the short scorpion toxin superfamily. Potassium channel inhibitor family. Alpha-KTx 12 subfamily. In terms of tissue distribution, expressed by the venom gland.

It is found in the secreted. Blocks mouse voltage-gated potassium channels Kv1.3/KCNA3 (IC(50)=0.3-30 nM), when the channel is expressed in Jurkat T cells or in HEK293 cells. Also shows a weaker inhibition on mKv1.2/KCNA2 (IC(50)=56.9 nM) and mKv1.1/KCNA1 (IC(50)=485 nM). Probably through the inhibition of both Kv1.2/KCNA2 and Kv1.3/KCNA3, the toxin also reduces the free calcium concentration in Jurkat T cells, inhibits the activation of Jurkat T cells and reduces the release of inflammatory cytokines interleukin-2, showing a strong immunosuppressant effect. The polypeptide is Potassium channel toxin alpha-KTX 12 Sp2 (Scorpiops pococki (Scorpion)).